Consider the following 487-residue polypeptide: Reticulon-like protein B21 (487 aa).

Positions 1 to 22 are enriched in low complexity; sequence MTPRRSLSSSDSNDKSPSVSVV. Disordered regions lie at residues 1–43, 65–86, and 113–149; these read MTPR…PGRV, LRKV…TEQE, and KSNE…EKKS. Positions 26–38 are enriched in basic and acidic residues; the sequence is ARSESVEGIEKKT. Acidic residues predominate over residues 118–143; it reads EQIDNGDQEIGDQDDYEEDGDEEEER. The 190-residue stretch at 230–419 folds into the Reticulon domain; it reads LVDLVMWRDV…FTLVWNLSSV (190 aa). The next 4 membrane-spanning stretches (helical) occupy residues 242–262, 264–284, 354–374, and 413–433; these read STLV…ANDL, FSFI…MFVL, ITLW…PKIF, and VWNL…LVAF. A compositionally biased stretch (acidic residues) spans 446–463; that stretch reads QADDDEDDNEEEEAEEEK. Residues 446-487 are disordered; that stretch reads QADDDEDDNEEEEAEEEKEQVPPKHKRAPPHMMMPNKLKKIS.

It is found in the endoplasmic reticulum membrane. This chain is Reticulon-like protein B21 (RTNLB21), found in Arabidopsis thaliana (Mouse-ear cress).